Reading from the N-terminus, the 40-residue chain is Unknown protein from spot 207 of 2D-PAGE of etiolated coleoptile (40 aa).

The protein belongs to the GST superfamily. HSP26 family.

The protein is Unknown protein from spot 207 of 2D-PAGE of etiolated coleoptile of Zea mays (Maize).